The chain runs to 62 residues: Large ribosomal subunit protein uL30 (62 aa).

This sequence belongs to the universal ribosomal protein uL30 family. In terms of assembly, part of the 50S ribosomal subunit.

The sequence is that of Large ribosomal subunit protein uL30 from Thioalkalivibrio sulfidiphilus (strain HL-EbGR7).